The following is a 119-amino-acid chain: Protein yippee-like 3 (119 aa).

Residues 19 to 116 enclose the Yippee domain; it reads RRYSCVHCRA…IELSHMIKDN (98 aa). 4 residues coordinate Zn(2+): C23, C26, C79, and C82.

This sequence belongs to the yippee family.

It is found in the nucleus. It localises to the nucleolus. Its function is as follows. May be involved in proliferation and apoptosis in myeloid precursor cells. This chain is Protein yippee-like 3 (ypel3), found in Oryzias latipes (Japanese rice fish).